The following is a 372-amino-acid chain: 2-aminoethylphosphonate--pyruvate transaminase 2 (372 aa).

Lys192 bears the N6-(pyridoxal phosphate)lysine mark.

It belongs to the class-V pyridoxal-phosphate-dependent aminotransferase family. PhnW subfamily. Homodimer. Pyridoxal 5'-phosphate serves as cofactor.

The catalysed reaction is (2-aminoethyl)phosphonate + pyruvate = phosphonoacetaldehyde + L-alanine. Functionally, involved in phosphonate degradation. The sequence is that of 2-aminoethylphosphonate--pyruvate transaminase 2 from Polaromonas sp. (strain JS666 / ATCC BAA-500).